The chain runs to 262 residues: Small ribosomal subunit protein eS1 (262 aa).

A compositionally biased stretch (basic and acidic residues) spans 234 to 251; that stretch reads DPKEDSGKNVKSLPESKE. The tract at residues 234 to 262 is disordered; that stretch reads DPKEDSGKNVKSLPESKEATNILTAELKH.

Belongs to the eukaryotic ribosomal protein eS1 family. As to quaternary structure, component of the small ribosomal subunit. Mature ribosomes consist of a small (40S) and a large (60S) subunit. The 40S subunit contains about 33 different proteins and 1 molecule of RNA (18S). The 60S subunit contains about 49 different proteins and 3 molecules of RNA (25S, 5.8S and 5S).

The protein localises to the cytoplasm. This chain is Small ribosomal subunit protein eS1, found in Plasmodium yoelii yoelii.